Consider the following 259-residue polypeptide: Methyltransferase sdnD (259 aa).

It belongs to the FkbM methyltransferase family.

It participates in antibiotic biosynthesis. Its function is as follows. Methyltransferase; part of the gene cluster that mediates the biosynthesis of sordarin and hypoxysordarin, glycoside antibiotics with a unique tetracyclic diterpene aglycone structure. First, the geranylgeranyl diphosphate synthase sdnC constructs GGDP from farnesyl diphosphate and isopentenyl diphosphate. The diterpene cyclase sdnA then catalyzes the cyclization of GGDP to afford cycloaraneosene. Cycloaraneosene is then hydroxylated four times by the putative cytochrome P450 monooxygenases sdnB, sdnE, sdnF and sdnH to give a hydroxylated cycloaraneosene derivative such as cycloaraneosene-8,9,13,19-tetraol. Although the order of the hydroxylations is unclear, at least C8, C9 and C13 of the cycloaraneosene skeleton are hydroxylated before the sordaricin formation. Dehydration of the 13-hydroxy group of the hydroxylated cycloaraneosene derivative might be catalyzed by an unassigned hypothetical protein such as sdnG and sdnP to construct the cyclopentadiene moiety. The FAD-dependent oxidoreductase sdnN is proposed to catalyze the oxidation at C9 of the hydroxylated cycloaraneosene derivative and also catalyze the Baeyer-Villiger oxidation to give the lactone intermediate. The presumed lactone intermediate would be hydrolyzed to give an acrolein moiety and a carboxylate moiety. Then, [4+2]cycloaddition would occur between the acrolein moiety and the cyclopentadiene moiety to give sordaricin. SdnN might also be involved in the [4+2]cycloaddition after the hypothesized oxidation to accommodate the oxidized product and prompt the [4+2]cycloaddition. GDP-6-deoxy-D-altrose may be biosynthesized from GDP-D-mannose by the putative GDP-mannose-4,6-dehydratase sdnI and the short-chain dehydrogenase sdnK. The glycosyltransferase sdnJ catalyzes the attachment of 6-deoxy-D-altrose onto the 19-hydroxy group of sordaricin to give 4'-O-demethylsordarin. The methyltransferase sdnD would complete the biosynthesis of sordarin. Sordarin can be further modified into hypoxysordarin. The unique acyl chain at the 3'-hydroxy group of hypoxysordarin would be constructed by an iterative type I PKS sdnO and the trans-acting polyketide methyltransferase sdnL. SdnL would be responsible for the introduction of an alpha-methyl group of the polyketide chain. Alternatively, the beta-lactamase-like protein sdnR might be responsible for the cleavage and transfer of the polyketide chain from the PKS sdnO to sordarin. Two putative cytochrome P450 monooxygenases, sdnQ and sdnT, might catalyze the epoxidations of the polyketide chain to complete the biosynthesis of hypoxysordarin. Transcriptional regulators sdnM and sdnS are presumably encoded for the transcriptional regulation of the expression of the sdn gene cluster. This Sordaria araneosa (Pleurage araneosa) protein is Methyltransferase sdnD.